A 160-amino-acid chain; its full sequence is Probable dihydroneopterin aldolase 3 (160 aa).

Residues Glu-59, Phe-91, and 110–111 (YE) each bind substrate. Lys-137 (proton donor/acceptor) is an active-site residue.

This sequence belongs to the DHNA family. In terms of assembly, homooctamer. Forms a hollow cylinder assembled from two ring-shaped tetramers. In terms of tissue distribution, expressed at very low levels in siliques.

The enzyme catalyses 7,8-dihydroneopterin = 6-hydroxymethyl-7,8-dihydropterin + glycolaldehyde. It functions in the pathway cofactor biosynthesis; tetrahydrofolate biosynthesis; 2-amino-4-hydroxy-6-hydroxymethyl-7,8-dihydropteridine diphosphate from 7,8-dihydroneopterin triphosphate: step 3/4. Its function is as follows. Catalyzes the conversion of 7,8-dihydroneopterin into 6-hydroxymethyl-7,8-dihydropterin, a biosynthetic precursor of the vitamin tetrahydrofolate. Can use L-threo-dihydroneopterin and D-erythro-dihydroneopterin as substrates for the formation of 6-hydroxymethyldihydropterin, but it can also catalyze the epimerization of carbon 2' of dihydroneopterin and dihydromonapterin. The protein is Probable dihydroneopterin aldolase 3 of Arabidopsis thaliana (Mouse-ear cress).